The primary structure comprises 543 residues: MARFIFITGGVVSSLGKGLMAASLAALLQARGYRVRIRKFDPYLNVDPGTMSPYQHGEVYVTDDGAETDLDLGHYERFTGVAARQSDNVTSGRIYQGIIAKERRGDYLGATVQVVPHVTDAIKDFARAETDDLDFVLCEIGGTVGDIESLPFIEAIRQLKNEVGRDNAISVHVTLVPYIAAAGELKTKPTQHSVRELASLGVQPDILLCRCEKPLPDSERAKIALFCNVRKEAVIPALDADSIYSVPVQYHGEGLDSEVLRAFGILDAPAPDLTAWYDIMDRKQHPEGEVTIGVVGKYVSLPDAYKSLNEALVHGGMAHRVKVNIRWLDAEMFERDEDLVANLEPLHGILVPGGFGERGSEGKIASVRFARERNVPFFGICLGMQMACIEAARNTSGIANASSTEFGPTDEPVVGLITEWMSAEGLQKRGANTDLGGTMRLGAYDAKLSPNSHVASVYGTNEISERHRHRYEVNGAYRERLEKGGLVFSGMSPDGMLPEIVERPDHPWFIGVQFHPELKSKPFDPHPLFAGFIEAAVKQSRLV.

Residues 1–265 (MARFIFITGG…DSEVLRAFGI (265 aa)) form an amidoligase domain region. Position 13 (S13) interacts with CTP. S13 contacts UTP. 14–19 (SLGKGL) contacts ATP. Y54 provides a ligand contact to L-glutamine. D71 lines the ATP pocket. Mg(2+) contacts are provided by D71 and E139. Residues 146–148 (DIE), 186–191 (KTKPTQ), and K222 each bind CTP. UTP-binding positions include 186–191 (KTKPTQ) and K222. The 252-residue stretch at 291–542 (TIGVVGKYVS…IEAAVKQSRL (252 aa)) folds into the Glutamine amidotransferase type-1 domain. G354 lines the L-glutamine pocket. C381 (nucleophile; for glutamine hydrolysis) is an active-site residue. L-glutamine-binding positions include 382–385 (LGMQ), E405, and R470. Residues H515 and E517 contribute to the active site.

This sequence belongs to the CTP synthase family. As to quaternary structure, homotetramer.

The catalysed reaction is UTP + L-glutamine + ATP + H2O = CTP + L-glutamate + ADP + phosphate + 2 H(+). It catalyses the reaction L-glutamine + H2O = L-glutamate + NH4(+). It carries out the reaction UTP + NH4(+) + ATP = CTP + ADP + phosphate + 2 H(+). It participates in pyrimidine metabolism; CTP biosynthesis via de novo pathway; CTP from UDP: step 2/2. With respect to regulation, allosterically activated by GTP, when glutamine is the substrate; GTP has no effect on the reaction when ammonia is the substrate. The allosteric effector GTP functions by stabilizing the protein conformation that binds the tetrahedral intermediate(s) formed during glutamine hydrolysis. Inhibited by the product CTP, via allosteric rather than competitive inhibition. Functionally, catalyzes the ATP-dependent amination of UTP to CTP with either L-glutamine or ammonia as the source of nitrogen. Regulates intracellular CTP levels through interactions with the four ribonucleotide triphosphates. This is CTP synthase from Sphingopyxis alaskensis (strain DSM 13593 / LMG 18877 / RB2256) (Sphingomonas alaskensis).